The sequence spans 374 residues: Eukaryotic translation initiation factor 3 subunit M (374 aa).

The PCI domain maps to 180–339; that stretch reads TAAKVMVELL…RKVVVSHSTH (160 aa).

Belongs to the eIF-3 subunit M family. Component of the eukaryotic translation initiation factor 3 (eIF-3) complex, which is composed of 13 subunits: EIF3A, EIF3B, EIF3C, EIF3D, EIF3E, EIF3F, EIF3G, EIF3H, EIF3I, EIF3J, EIF3K, EIF3L and EIF3M.

It localises to the cytoplasm. Component of the eukaryotic translation initiation factor 3 (eIF-3) complex, which is involved in protein synthesis of a specialized repertoire of mRNAs and, together with other initiation factors, stimulates binding of mRNA and methionyl-tRNAi to the 40S ribosome. The eIF-3 complex specifically targets and initiates translation of a subset of mRNAs involved in cell proliferation. The chain is Eukaryotic translation initiation factor 3 subunit M from Gallus gallus (Chicken).